Reading from the N-terminus, the 140-residue chain is Protein KRTCAP2 homolog (140 aa).

A run of 4 helical transmembrane segments spans residues 11–31, 40–60, 74–94, and 98–118; these read LLSSIISGILSLVIFATLRFC, LNVLVGGYLFSWLFILSLTCV, AKLVPEILFCLSLTVAAAGIV, and CATTSVLFSLVGLYFLNRISI.

This sequence belongs to the KRTCAP2 family. As to quaternary structure, component of the oligosaccharyltransferase (OST) complex.

It is found in the membrane. Functionally, subunit of the oligosaccharyl transferase (OST) complex that catalyzes the initial transfer of a defined glycan (Glc(3)Man(9)GlcNAc(2) in eukaryotes) from the lipid carrier dolichol-pyrophosphate to an asparagine residue within an Asn-X-Ser/Thr consensus motif in nascent polypeptide chains, the first step in protein N-glycosylation. N-glycosylation occurs cotranslationally and the complex associates with the Sec61 complex at the channel-forming translocon complex that mediates protein translocation across the endoplasmic reticulum (ER). All subunits are required for a maximal enzyme activity. In Drosophila pseudoobscura pseudoobscura (Fruit fly), this protein is Protein KRTCAP2 homolog.